Here is a 523-residue protein sequence, read N- to C-terminus: MFS-type transporter R5 (523 aa).

Residues 19 to 42 (QLNEATAQRESATNNPNDSSSIDE) form a disordered region. Positions 21 to 38 (NEATAQRESATNNPNDSS) are enriched in polar residues. N-linked (GlcNAc...) asparagine glycans are attached at residues Asn35, Asn94, and Asn143. The next 2 helical transmembrane spans lie at 183 to 203 (AYLT…GGLL) and 211 to 231 (AIFW…FTFF). 2 N-linked (GlcNAc...) asparagine glycosylation sites follow: Asn235 and Asn250. 6 consecutive transmembrane segments (helical) span residues 291–311 (FIVC…ISIF), 319–339 (YGYS…GSIL), 381–401 (LTIS…YGWL), 408–428 (VASV…VLIA), 443–463 (ALGA…VAAV), and 470–490 (IGIG…LPAL).

It belongs to the major facilitator superfamily.

It localises to the membrane. Its function is as follows. MFS-type transporter; part of the gene cluster that mediates the biosynthesis of squalestatin S1 (SQS1, also known as zaragozic acid A), a heavily oxidized fungal polyketide that offers potent cholesterol lowering activity by targeting squalene synthase (SS). The protein is MFS-type transporter R5 of Phoma sp. (strain ATCC 20986 / MF5453).